A 411-amino-acid polypeptide reads, in one-letter code: Serine--tRNA ligase (411 aa).

226–228 (TSE) serves as a coordination point for L-serine. 257-259 (RKE) serves as a coordination point for ATP. Glu-280 provides a ligand contact to L-serine. 344 to 347 (EISS) is a binding site for ATP. Ser-379 serves as a coordination point for L-serine.

Belongs to the class-II aminoacyl-tRNA synthetase family. Type-1 seryl-tRNA synthetase subfamily. In terms of assembly, homodimer. The tRNA molecule binds across the dimer.

Its subcellular location is the cytoplasm. It carries out the reaction tRNA(Ser) + L-serine + ATP = L-seryl-tRNA(Ser) + AMP + diphosphate + H(+). The catalysed reaction is tRNA(Sec) + L-serine + ATP = L-seryl-tRNA(Sec) + AMP + diphosphate + H(+). It functions in the pathway aminoacyl-tRNA biosynthesis; selenocysteinyl-tRNA(Sec) biosynthesis; L-seryl-tRNA(Sec) from L-serine and tRNA(Sec): step 1/1. Its function is as follows. Catalyzes the attachment of serine to tRNA(Ser). Is also able to aminoacylate tRNA(Sec) with serine, to form the misacylated tRNA L-seryl-tRNA(Sec), which will be further converted into selenocysteinyl-tRNA(Sec). The sequence is that of Serine--tRNA ligase from Campylobacter jejuni subsp. doylei (strain ATCC BAA-1458 / RM4099 / 269.97).